The primary structure comprises 136 residues: Small ribosomal subunit protein bS16 (136 aa).

Positions 114-123 (TLKARRRRAK) are enriched in basic residues. The disordered stretch occupies residues 114–136 (TLKARRRRAKKEAEAASASSAEG).

Belongs to the bacterial ribosomal protein bS16 family.

In Chlorobium chlorochromatii (strain CaD3), this protein is Small ribosomal subunit protein bS16.